A 190-amino-acid polypeptide reads, in one-letter code: MGGTFDPVHNGHLVAASEVAALFDLDEVVFVPSGQPWQKVHRVVSDPEDRYLMTFLATAENPQFTVSRVEIDRGGATYTIDTLRDLRGARPDDELFFITGADALAQIFTWRDHRELFELAHFVGVSRPGYQLALDAALPANSVSLLEVPALAISSSDIRQRVGRGAPIWYLTPDGVVRYIAKRHLYQSRA.

Belongs to the NadD family.

It catalyses the reaction nicotinate beta-D-ribonucleotide + ATP + H(+) = deamido-NAD(+) + diphosphate. The protein operates within cofactor biosynthesis; NAD(+) biosynthesis; deamido-NAD(+) from nicotinate D-ribonucleotide: step 1/1. Functionally, catalyzes the reversible adenylation of nicotinate mononucleotide (NaMN) to nicotinic acid adenine dinucleotide (NaAD). The polypeptide is Probable nicotinate-nucleotide adenylyltransferase (Frankia alni (strain DSM 45986 / CECT 9034 / ACN14a)).